Here is a 182-residue protein sequence, read N- to C-terminus: Mesencephalic astrocyte-derived neurotrophic factor (182 aa).

The signal sequence occupies residues 1–24 (MRRMWATQGLAVALALSVLPGSRA). 4 disulfides stabilise this stretch: cysteine 30-cysteine 117, cysteine 33-cysteine 106, cysteine 64-cysteine 75, and cysteine 151-cysteine 154. Position 76 is a phosphotyrosine (tyrosine 76). The interval 96-158 (LAHHIPVEKI…ETCKGCAEKS (63 aa)) is interacts with ERN1, EIF2AK3 and ATF6. The segment at 129-172 (TVDLKKLRVKELKKILDDWGETCKGCAEKSDYIRKINELMPKYA) is interacts with HSPA5.

This sequence belongs to the ARMET family. In terms of assembly, interacts directly (via SAP domain) with HSPA5/BiP; the interaction inhibits ATP binding to HSPA5/BiP and subsequent nucleotide exchange. Component of a complex containing at least CRELD2, MANF, MATN3 and PDIA4. Interacts (via C-terminus) with ERN1 (via luminal domain); the interaction is decreased in the presence of increasing concentrations of Ca(2+). In terms of processing, may contain sialic acid residues.

The protein resides in the secreted. The protein localises to the endoplasmic reticulum lumen. It is found in the sarcoplasmic reticulum lumen. Its function is as follows. Selectively promotes the survival of dopaminergic neurons of the ventral mid-brain. Modulates GABAergic transmission to the dopaminergic neurons of the substantia nigra. Enhances spontaneous, as well as evoked, GABAergic inhibitory postsynaptic currents in dopaminergic neurons. Inhibits cell proliferation and endoplasmic reticulum (ER) stress-induced cell death. Retained in the ER/sarcoplasmic reticulum (SR) through association with the endoplasmic reticulum chaperone protein HSPA5 under normal conditions. Stabilizes HSPA5/BiP in its substrate-bound ADP state, which facilitates HSPA5/BiP incorporation into chaperone-client complexes during endoplasmic reticulum stress, its interaction with HSPA5/BiP inhibits ATP binding to HSPA5/BiP and subsequent nucleotide exchange. As a result acts as a repressor of the unfolded protein response (UPR) pathway. Up-regulated and secreted by the ER/SR in response to ER stress and hypoxia. Following secretion by the ER/SR, directly binds to 3-O-sulfogalactosylceramide, a lipid sulfatide in the outer cell membrane of target cells. Sulfatide binding promotes its cellular uptake by endocytosis, and is required for its role in alleviating ER stress and cell toxicity under hypoxic and ER stress conditions. Essential for embryonic lung development. Required for the correct postnatal temporal and structural development of splenic white pulp. Required for the repair-associated myeloid response in skeletal muscle, acts as a regulator of phenotypic transition towards prorepair macrophages in response to muscle injury and as a result limits excessive proinflammatory signaling. Represses RELA expression and therefore NF-kB signaling in the myocardium, as a result limits macrophage infiltration of injured tissue and M1 macrophage differentiation in response to myocardial injury. Required for endochondral ossification in long bones and the skull during postnatal development. This Homo sapiens (Human) protein is Mesencephalic astrocyte-derived neurotrophic factor.